Reading from the N-terminus, the 96-residue chain is Protein RnfH (96 aa).

The protein belongs to the UPF0125 (RnfH) family.

The polypeptide is Protein RnfH (Psychromonas ingrahamii (strain DSM 17664 / CCUG 51855 / 37)).